The chain runs to 561 residues: Asparagine synthetase [glutamine-hydrolyzing] (561 aa).

Cys2 serves as the catalytic For GATase activity. The 190-residue stretch at 2-191 (CGIWALFGSD…PGHYEVLDLK (190 aa)) folds into the Glutamine amidotransferase type-2 domain. Residues 49–53 (RLAVV), 75–77 (NGE), and Asp97 each bind L-glutamine. In terms of domain architecture, Asparagine synthetase spans 213–536 (HALYDSVEKL…PGRADWLTHY (324 aa)). Residues Leu256, Ile288, and 363–364 (SG) contribute to the ATP site. Lys385 is modified (N6-acetyllysine). Phosphothreonine is present on Thr545. Residue Ser557 is modified to Phosphoserine.

The catalysed reaction is L-aspartate + L-glutamine + ATP + H2O = L-asparagine + L-glutamate + AMP + diphosphate + H(+). It functions in the pathway amino-acid biosynthesis; L-asparagine biosynthesis; L-asparagine from L-aspartate (L-Gln route): step 1/1. In Mesocricetus auratus (Golden hamster), this protein is Asparagine synthetase [glutamine-hydrolyzing] (ASNS).